Here is a 165-residue protein sequence, read N- to C-terminus: Myosin regulatory light chain 2A, cardiac muscle isoform (165 aa).

The residue at position 2 (A2) is a N,N,N-trimethylalanine. 3 consecutive EF-hand domains span residues 24 to 59 (AQIQ…LGRL), 94 to 128 (DPEE…QEGR), and 129 to 164 (FSQE…GEEK). Ca(2+) is bound by residues D37, N39, D41, and D48.

As to quaternary structure, myosin is a hexamer of 2 heavy chains and 4 light chains. In terms of processing, the N-terminus is blocked. N,N,N-trimethylalanine, found in other myosin light chains would not have been detected in the N-terminal tryptic peptide in PubMed:7319048 because it would remain trimethylated and ninhydrin negative after hydrolysis.

In Gallus gallus (Chicken), this protein is Myosin regulatory light chain 2A, cardiac muscle isoform.